A 187-amino-acid chain; its full sequence is Threonylcarbamoyl-AMP synthase (187 aa).

The region spanning 3–187 is the YrdC-like domain; the sequence is QVLPADAAEL…ARSGTVIREG (185 aa).

Belongs to the SUA5 family. TsaC subfamily.

It localises to the cytoplasm. The enzyme catalyses L-threonine + hydrogencarbonate + ATP = L-threonylcarbamoyladenylate + diphosphate + H2O. Its function is as follows. Required for the formation of a threonylcarbamoyl group on adenosine at position 37 (t(6)A37) in tRNAs that read codons beginning with adenine. Catalyzes the conversion of L-threonine, HCO(3)(-)/CO(2) and ATP to give threonylcarbamoyl-AMP (TC-AMP) as the acyladenylate intermediate, with the release of diphosphate. The protein is Threonylcarbamoyl-AMP synthase of Shewanella pealeana (strain ATCC 700345 / ANG-SQ1).